The primary structure comprises 853 residues: MASKTKTSLSETTTTTTPTGKSSPATPRIAKRTVNKSETSNNNSPSTTTPHSRLSLDRSSPNSKSSVERRSPKLPTPPEKSQARVAAVKGTESPQTTTRLSQIKEDLKKANERISSLEKDKAKALDELKQAKKEAEQVTLKLDDALKAQKHVEENSEIEKFQAVEAGIEAVQNNEEELKKELETVKNQHASDSAALVAVRQELEKINEELAAAFDAKSKALSQAEDASKTAEIHAEKVDILSSELTRLKALLDSTREKTAISDNEMVAKLEDEIVVLKRDLESARGFEAEVKEKEMIVEKLNVDLEAAKMAESNAHSLSNEWQSKAKELEEQLEEANKLERSASVSLESVMKQLEGSNDKLHDTETEITDLKERIVTLETTVAKQKEDLEVSEQRLGSVEEEVSKNEKEVEKLKSELETVKEEKNRALKKEQDATSRVQRLSEEKSKLLSDLESSKEEEEKSKKAMESLASALHEVSSEGRELKEKLLSQGDHEYETQIDDLKLVIKATNEKYENMLDEARHEIDVLVSAVEQTKKHFESSKKDWEMKEANLVNYVKKMEEDVASMGKEMNRLDNLLKRTEEEADAAWKKEAQTKDSLKEVEEEIVYLQETLGEAKAESMKLKENLLDKETEFQNVIHENEDLKAKEDVSLKKIEELSKLLEEAILAKKQPEEENGELSESEKDYDLLPKVVEFSSENGHRSVEEKSAKVETLDHEPPQEQISNGNSNGNGMEEKEVNGKPEVETEKKEKKDESQDDDKDDSVEVIFKMWESCQIEKKEAFPDKKSELESQEEEEDSSKIDESDKTSTENIDETGNALTAEDQLTMEKKIKKKKTLLGKVGNLLKKKAPVNQK.

Low complexity-rich tracts occupy residues 1-27 (MASKTKTSLSETTTTTTPTGKSSPATP) and 36-49 (KSETSNNNSPSTTT). The N-terminal 84 residues, 1–84 (MASKTKTSLS…PTPPEKSQAR (84 aa)), are a transit peptide targeting the chloroplast. Disordered regions lie at residues 1–106 (MASK…IKED), 386–465 (KEDL…SKKA), 666–765 (LAKK…SVEV), and 778–820 (KEAF…ALTA). Residues 92 to 101 (ESPQTTTRLS) show a composition bias toward polar residues. A coiled-coil region spans residues 94–670 (PQTTTRLSQI…LEEAILAKKQ (577 aa)). 3 stretches are compositionally biased toward basic and acidic residues: residues 402–465 (EVSK…SKKA), 698–718 (NGHRSVEEKSAKVETLDHEPP), and 732–753 (MEEKEVNGKPEVETEKKEKKDE). A compositionally biased stretch (acidic residues) spans 754-763 (SQDDDKDDSV). Positions 778 to 788 (KEAFPDKKSEL) are enriched in basic and acidic residues. Serine 790 carries the phosphoserine modification. Residues 797–807 (SSKIDESDKTS) show a composition bias toward basic and acidic residues.

The protein belongs to the WEB family.

The protein localises to the plastid. The protein resides in the chloroplast. In Arabidopsis thaliana (Mouse-ear cress), this protein is WEB family protein At5g16730, chloroplastic.